The primary structure comprises 337 residues: GDP-fucose transporter, Golgi (337 aa).

A run of 8 helical transmembrane segments spans residues 13-35 (NKYLKIFFVVSLYWCTSILTVFV), 45-67 (VNLGAPLFMSWFQCVVSTVICFV), 95-117 (ILPLSVLYTLMIGANNLSLSYVT), 121-140 (YYIGRSLTTVFSVVLTYVIL), 145-163 (SFKCLLCCGAIVVGFWLGV), 173-192 (SWRGTIFGVLSSLALAMFSI), 205-227 (VWLLSYYNNLYSTLLFLPLIIIN), and 242-264 (SWFWAAMTLSGLCGFAIGFVTAL).

This sequence belongs to the TPT transporter family. SLC35C subfamily.

The protein localises to the golgi apparatus membrane. Involved in GDP-fucose import from the cytoplasm into the Golgi lumen. Plays a major role in the fucosylation of N-glycans. Functions redundantly with Efr in the O-fucosylation of Notch, positively regulating Notch signaling. The sequence is that of GDP-fucose transporter, Golgi from Drosophila melanogaster (Fruit fly).